A 662-amino-acid polypeptide reads, in one-letter code: p-hydroxybenzoic acid efflux pump subunit AaeB (662 aa).

The next 11 membrane-spanning stretches (helical) occupy residues 22 to 42 (FAFKLSFAIVLSLFLGFHLQL), 52 to 72 (AAIVAAGPAFAAGGEPFSGAI), 76 to 96 (GMLRVVGTFIGCIGALIIIIA), 102 to 122 (VVMLMLCCIWAGLCTWVSSLV), 129 to 149 (VFGLAGYTTLIIIVSTQGTPL), 161 to 181 (EIVLGIVCAILADLLFSPRSI), 378 to 398 (LFWLSTGWTSGSVCMVMIAVV), 415 to 435 (FLFGTIYALPLGALMFMFIMP), 439 to 459 (QSMLLLCLSLGAMAFFLGLEV), 467 to 487 (LGALASTINILVLDNPMTFHI), and 491 to 511 (LDSAIGQIIGCFLALMVILLI).

The protein belongs to the aromatic acid exporter ArAE (TC 2.A.85) family.

Its subcellular location is the cell inner membrane. Functionally, forms an efflux pump with AaeA. Could function as a metabolic relief valve, allowing to eliminate certain compounds when they accumulate to high levels in the cell. The chain is p-hydroxybenzoic acid efflux pump subunit AaeB from Pectobacterium carotovorum subsp. carotovorum (strain PC1).